The following is a 344-amino-acid chain: Lipase chaperone (344 aa).

A helical transmembrane segment spans residues 14–34; that stretch reads VAVYGAVGLAAIAGVAIWSGA. Low complexity predominate over residues 45 to 57; that stretch reads LSADAAARDGASA. Positions 45–78 are disordered; it reads LSADAAARDGASAAPPPPARPASAGMPSPLAGSS.

This sequence belongs to the lipase chaperone family.

Its subcellular location is the cell inner membrane. May be involved in the folding of the extracellular lipase during its passage through the periplasm. This is Lipase chaperone from Burkholderia ambifaria (strain ATCC BAA-244 / DSM 16087 / CCUG 44356 / LMG 19182 / AMMD) (Burkholderia cepacia (strain AMMD)).